The chain runs to 1048 residues: NACHT, LRR and PYD domains-containing protein 8 (1048 aa).

Residues 1–23 (MSDVNPPSDTPIPFSSSSTHSSH) form a disordered region. Positions 11–23 (PIPFSSSSTHSSH) are enriched in low complexity. The 99-residue stretch at 33–131 (PGSPCENGVM…NAILPTLEPE (99 aa)) folds into the Pyrin domain. One can recognise an NACHT domain in the interval 204 to 527 (KTVAIQGAPG…FYVLCFPQRL (324 aa)). Position 210–217 (210–217 (GAPGIGKT)) interacts with ATP. LRR repeat units follow at residues 815–838 (NGHL…YLSV), 839–861 (AQLE…SLAS), 866–890 (SKML…IWNA), 923–950 (NKTL…ALKN), and 980–1007 (NQHL…AFSS). Residues 1029-1048 (PTPHPPDFTGKSDCLSQINP) are disordered.

This sequence belongs to the NLRP family.

The protein localises to the cytoplasm. Involved in inflammation. This chain is NACHT, LRR and PYD domains-containing protein 8 (NLRP8), found in Homo sapiens (Human).